A 573-amino-acid chain; its full sequence is MGFRINTNIGALNAHANSVVNARELDKSLSRLSSGLRINSAADDASGMAIADSLRSQAATLGQAINNGNDAIGILQTADKAMDEQLKILDTIKTKATQAAQDGQSLKTRTMLQADINRLMEELDNIANTTSFNGKQLLSGGFTNQEFQIGSSSNQTIKASIGATQSSKIGVTRFETGSQSFSSGTVGLTIKNYNGIEDFKFDSVVISTSVGTGLGALAEEINRNADKTGIRATFDVKSVGAYAIKAGNTSQDFAINGVVIGQINYNDGDNNGQLISAINAVKDTTGVQASKDENGKLVLTSADGRGIKITGSIGVGAGILHTENYGRLSLVKNDGRDINISGTGLSAIGMGATDMISQSSVSLRESKGQISAANADAMGFNAYNGGGAKQIIFASSIAGFMSQAGSGFSAGSGFSVGSGKNYSAILSASIQIVSSARSISSTYVVSTGSGFSAGSGNSQFAALRISTVSAHDETAGVTTLKGAMAVMDIAETAITNLDQIRADIGAVQNQLQVTINNITVTQVNVKAAESTIRDVDFAAESANFSKYNILAQSGSYAMSQRNAVQQNVLKLLQ.

Belongs to the bacterial flagellin family. In terms of assembly, heteromer of FlaA and FlaB. A flagellar filament composed exclusively of FlaA is indistinguishable in length from that of the wild-type and shows a slight reduction in motility. The flagellar filament composed exclusively of the FlaB is severely truncated in length and greatly reduced in motility. Thus, while both flagellins are not necessary for motility, both are required for a fully active flagellar filament.

The protein localises to the secreted. The protein resides in the bacterial flagellum. Its function is as follows. Flagellin is the subunit protein which polymerizes to form the filaments of bacterial flagella. The protein is Flagellin B (flaB) of Campylobacter coli.